A 124-amino-acid polypeptide reads, in one-letter code: Small ribosomal subunit protein uS12 (124 aa).

Residues 1–26 (MPTISQLVGSERKRLTKKTKSPALKA) are disordered. The residue at position 89 (Asp-89) is a 3-methylthioaspartic acid. The interval 104-124 (TAGVKDRRQSRSKYGAKAPKD) is disordered.

It belongs to the universal ribosomal protein uS12 family. In terms of assembly, part of the 30S ribosomal subunit. Contacts proteins S8 and S17. May interact with IF1 in the 30S initiation complex.

In terms of biological role, with S4 and S5 plays an important role in translational accuracy. Interacts with and stabilizes bases of the 16S rRNA that are involved in tRNA selection in the A site and with the mRNA backbone. Located at the interface of the 30S and 50S subunits, it traverses the body of the 30S subunit contacting proteins on the other side and probably holding the rRNA structure together. The combined cluster of proteins S8, S12 and S17 appears to hold together the shoulder and platform of the 30S subunit. In Prochlorococcus marinus (strain MIT 9215), this protein is Small ribosomal subunit protein uS12.